The chain runs to 317 residues: Transaldolase (317 aa).

Lys132 acts as the Schiff-base intermediate with substrate in catalysis.

This sequence belongs to the transaldolase family. Type 1 subfamily. In terms of assembly, homodimer.

The protein resides in the cytoplasm. It catalyses the reaction D-sedoheptulose 7-phosphate + D-glyceraldehyde 3-phosphate = D-erythrose 4-phosphate + beta-D-fructose 6-phosphate. It functions in the pathway carbohydrate degradation; pentose phosphate pathway; D-glyceraldehyde 3-phosphate and beta-D-fructose 6-phosphate from D-ribose 5-phosphate and D-xylulose 5-phosphate (non-oxidative stage): step 2/3. Transaldolase is important for the balance of metabolites in the pentose-phosphate pathway. The polypeptide is Transaldolase (Yersinia enterocolitica serotype O:8 / biotype 1B (strain NCTC 13174 / 8081)).